Reading from the N-terminus, the 197-residue chain is ATP-dependent Clp protease proteolytic subunit (197 aa).

The active-site Nucleophile is the S98. H123 is an active-site residue.

It belongs to the peptidase S14 family. In terms of assembly, fourteen ClpP subunits assemble into 2 heptameric rings which stack back to back to give a disk-like structure with a central cavity, resembling the structure of eukaryotic proteasomes. Forms large heterooligomeric complexes consisting of an ATPase component (ClpX, ClpC or ClpE) and a proteolytic component (ClpP).

Its subcellular location is the cytoplasm. The enzyme catalyses Hydrolysis of proteins to small peptides in the presence of ATP and magnesium. alpha-casein is the usual test substrate. In the absence of ATP, only oligopeptides shorter than five residues are hydrolyzed (such as succinyl-Leu-Tyr-|-NHMec, and Leu-Tyr-Leu-|-Tyr-Trp, in which cleavage of the -Tyr-|-Leu- and -Tyr-|-Trp bonds also occurs).. Its activity is regulated as follows. Low intrinsic peptidase activity is stimulated by ATP-binding subunits ClpC, ClpE and ClpX. Activity is disregulated by acyldepsipeptides (ADEP) antibiotics, which negate the need for ATP-binding subunits for activation and which makes it into an unregulated protease. Each ClpP subunit binds 1 ADEP molecule, which prevents binding of ClpX. ADEP binding causes conformational shifts that open the gated pore of the ring. Protease activity is inhibited by diisopropylfluoro-phosphate. Protease activity is inhibited by bortezomib, an oncology drug originally designed to work on the human proteasome. In terms of biological role, cleaves peptides in various proteins in a process that requires ATP hydrolysis. Has a limited peptidase activity in the absence of ATP-binding subunits ClpC, ClpE or ClpX. Has a chymotrypsin-like activity. Plays a major role in the degradation of misfolded proteins. ClpXP is involved in the complete degradation of the site-2 clipped anti-sigma-W factor RsiW. This results in the release of SigW and the transcriptional activation of genes under the control of the sigma-W factor. Probably the major protease that degrades proteins tagged by trans-translation. The sequence is that of ATP-dependent Clp protease proteolytic subunit from Bacillus subtilis (strain 168).